Consider the following 481-residue polypeptide: Cysteine--tRNA ligase (481 aa).

Residue C43 participates in Zn(2+) binding. Residues 45–55 (ATVQGLPHIGH) carry the 'HIGH' region motif. The Zn(2+) site is built by C221, H246, and E250. A 'KMSKS' region motif is present at residues 277 to 281 (KMSKS). Position 280 (K280) interacts with ATP.

This sequence belongs to the class-I aminoacyl-tRNA synthetase family. Monomer. Zn(2+) is required as a cofactor.

Its subcellular location is the cytoplasm. It catalyses the reaction tRNA(Cys) + L-cysteine + ATP = L-cysteinyl-tRNA(Cys) + AMP + diphosphate. This chain is Cysteine--tRNA ligase, found in Mycobacterium sp. (strain KMS).